Reading from the N-terminus, the 304-residue chain is Ornithine carbamoyltransferase (304 aa).

Residues 47 to 50 (STRT), Arg-98, and 125 to 128 (HPCQ) each bind carbamoyl phosphate. Residues Asn-156, Asp-221, and 225-226 (SM) contribute to the L-ornithine site. Carbamoyl phosphate-binding positions include 262-263 (CL) and Arg-290.

Belongs to the aspartate/ornithine carbamoyltransferase superfamily. OTCase family.

It is found in the cytoplasm. It catalyses the reaction carbamoyl phosphate + L-ornithine = L-citrulline + phosphate + H(+). Its pathway is amino-acid biosynthesis; L-arginine biosynthesis; L-arginine from L-ornithine and carbamoyl phosphate: step 1/3. Reversibly catalyzes the transfer of the carbamoyl group from carbamoyl phosphate (CP) to the N(epsilon) atom of ornithine (ORN) to produce L-citrulline. The protein is Ornithine carbamoyltransferase of Methanococcus maripaludis (strain C5 / ATCC BAA-1333).